The chain runs to 263 residues: Hydroxyethylthiazole kinase (263 aa).

Met39 is a substrate binding site. Residues Lys115 and Thr160 each contribute to the ATP site. Gly187 lines the substrate pocket.

It belongs to the Thz kinase family. It depends on Mg(2+) as a cofactor.

The catalysed reaction is 5-(2-hydroxyethyl)-4-methylthiazole + ATP = 4-methyl-5-(2-phosphooxyethyl)-thiazole + ADP + H(+). It functions in the pathway cofactor biosynthesis; thiamine diphosphate biosynthesis; 4-methyl-5-(2-phosphoethyl)-thiazole from 5-(2-hydroxyethyl)-4-methylthiazole: step 1/1. Functionally, catalyzes the phosphorylation of the hydroxyl group of 4-methyl-5-beta-hydroxyethylthiazole (THZ). The polypeptide is Hydroxyethylthiazole kinase (Staphylococcus aureus (strain JH9)).